Reading from the N-terminus, the 201-residue chain is Cold shock domain-containing protein 4 (201 aa).

Position 2 is an N-acetylserine (Ser-2). The CSD domain occupies 14–81 (RRKGTVKWFD…RPKAIEVSGP (68 aa)). Residues 66–109 (EVDNSGRPKAIEVSGPDGAPVQGNSGGGGSSGGRGGFGGGGGRG) form a disordered region. A compositionally biased stretch (gly residues) spans 89–109 (NSGGGGSSGGRGGFGGGGGRG). 2 consecutive CCHC-type zinc fingers follow at residues 136–153 (NSCF…ECSQ) and 180–197 (LSCY…DCTS).

The protein belongs to the cold shock protein (CSP) family. In terms of tissue distribution, mostly expressed in shoot apices and siliques, and, to a lower extent, in roots, cotyledons, stems, shoots, leaves, floral buds and flowers. Present in shoot apical meristems and siliques (at protein level). Very low levels are observed in cv. Landsberg erecta compared to cv. Columbia.

The protein resides in the cytoplasm. It localises to the nucleus. The protein localises to the nucleolus. Its function is as follows. Chaperone that binds to and unwinds RNA and both single-stranded DNA and double-stranded DNA (ssDNA and dsDNA DNA). Regulates the flowering transition and flower and seed development, particularly at late stages of embryo development, through regulation of gene expression (including MEA, FIS2, AP1, CAL, AG and SHP2). The chain is Cold shock domain-containing protein 4 (CSP4) from Arabidopsis thaliana (Mouse-ear cress).